The following is a 187-amino-acid chain: Peptide deformylase (187 aa).

Residues Cys-96 and His-138 each coordinate Fe cation. Glu-139 is an active-site residue. Position 142 (His-142) interacts with Fe cation.

This sequence belongs to the polypeptide deformylase family. Fe(2+) is required as a cofactor.

The catalysed reaction is N-terminal N-formyl-L-methionyl-[peptide] + H2O = N-terminal L-methionyl-[peptide] + formate. Functionally, removes the formyl group from the N-terminal Met of newly synthesized proteins. Requires at least a dipeptide for an efficient rate of reaction. N-terminal L-methionine is a prerequisite for activity but the enzyme has broad specificity at other positions. This Brachyspira hyodysenteriae (strain ATCC 49526 / WA1) protein is Peptide deformylase.